The primary structure comprises 77 residues: U11-lycotoxin-Ls1a (77 aa).

The first 20 residues, 1–20 (MKLIILTGLVLFAIVSFIEA), serve as a signal peptide directing secretion. The propeptide occupies 21-26 (EEETGR).

This sequence belongs to the neurotoxin 19 (CSTX) family. 10 (U11-Lctx) subfamily. Contains 4 disulfide bonds. As to expression, expressed by the venom gland.

The protein localises to the secreted. The chain is U11-lycotoxin-Ls1a from Lycosa singoriensis (Wolf spider).